The following is a 209-amino-acid chain: Small ribosomal subunit protein uS3 (209 aa).

Residues 17–86 (IDEFLEKELR…NPQIEVEEIK (70 aa)) form the KH type-2 domain.

It belongs to the universal ribosomal protein uS3 family. As to quaternary structure, part of the 30S ribosomal subunit.

Functionally, binds the lower part of the 30S subunit head. The protein is Small ribosomal subunit protein uS3 of Thermococcus kodakarensis (strain ATCC BAA-918 / JCM 12380 / KOD1) (Pyrococcus kodakaraensis (strain KOD1)).